The sequence spans 239 residues: Protein GrpE (239 aa).

Disordered stretches follow at residues Met-1–Asp-60 and Ser-208–Val-239. Residues Ser-28 to Gln-42 show a composition bias toward polar residues. 2 stretches are compositionally biased toward basic and acidic residues: residues Lys-43–Lys-53 and Ser-216–Val-225. Residues Glu-226 to Val-239 are compositionally biased toward acidic residues.

This sequence belongs to the GrpE family. Homodimer.

The protein resides in the cytoplasm. Participates actively in the response to hyperosmotic and heat shock by preventing the aggregation of stress-denatured proteins, in association with DnaK and GrpE. It is the nucleotide exchange factor for DnaK and may function as a thermosensor. Unfolded proteins bind initially to DnaJ; upon interaction with the DnaJ-bound protein, DnaK hydrolyzes its bound ATP, resulting in the formation of a stable complex. GrpE releases ADP from DnaK; ATP binding to DnaK triggers the release of the substrate protein, thus completing the reaction cycle. Several rounds of ATP-dependent interactions between DnaJ, DnaK and GrpE are required for fully efficient folding. The polypeptide is Protein GrpE (Prochlorococcus marinus (strain MIT 9301)).